Reading from the N-terminus, the 319-residue chain is Coproporphyrin III ferrochelatase 2 (319 aa).

Fe-coproporphyrin III contacts are provided by residues Tyr-13, Arg-30, 46-47, Ser-54, and Tyr-125; that span reads RY. Fe(2+) contacts are provided by His-181 and Glu-262.

Belongs to the ferrochelatase family.

It is found in the cytoplasm. The catalysed reaction is Fe-coproporphyrin III + 2 H(+) = coproporphyrin III + Fe(2+). It functions in the pathway porphyrin-containing compound metabolism; protoheme biosynthesis. Involved in coproporphyrin-dependent heme b biosynthesis. Catalyzes the insertion of ferrous iron into coproporphyrin III to form Fe-coproporphyrin III. In Bacillus anthracis, this protein is Coproporphyrin III ferrochelatase 2.